We begin with the raw amino-acid sequence, 98 residues long: Co-chaperonin GroES (98 aa).

This sequence belongs to the GroES chaperonin family. As to quaternary structure, heptamer of 7 subunits arranged in a ring. Interacts with the chaperonin GroEL.

Its subcellular location is the cytoplasm. Its function is as follows. Together with the chaperonin GroEL, plays an essential role in assisting protein folding. The GroEL-GroES system forms a nano-cage that allows encapsulation of the non-native substrate proteins and provides a physical environment optimized to promote and accelerate protein folding. GroES binds to the apical surface of the GroEL ring, thereby capping the opening of the GroEL channel. The sequence is that of Co-chaperonin GroES from Neorickettsia sennetsu (strain ATCC VR-367 / Miyayama) (Ehrlichia sennetsu).